The chain runs to 184 residues: Endothelial cell-specific molecule 1 (184 aa).

A signal peptide spans 1–21 (MKSLLLLTTLLVPLHLGMAWS). Residues 24–102 (YAVDCPEHCD…GDEFGICKDC (79 aa)) form the IGFBP N-terminal domain. 6 disulfides stabilise this stretch: cysteine 28/cysteine 51, cysteine 32/cysteine 53, cysteine 37/cysteine 54, cysteine 43/cysteine 57, cysteine 65/cysteine 83, and cysteine 77/cysteine 99. Positions 145 to 184 (RTSASHTERDSASGDGNAVREEIGEGNAARPSVMKWLNPR) are disordered. Over residues 150-167 (HTERDSASGDGNAVREEI) the composition is skewed to basic and acidic residues. Serine 157 carries O-linked (Xyl...) (chondroitin sulfate) serine glycosylation.

O-glycosylated; contains chondroitin sulfate and dermatan sulfate.

It is found in the secreted. Functionally, involved in angiogenesis; promotes angiogenic sprouting. May have potent implications in lung endothelial cell-leukocyte interactions. This chain is Endothelial cell-specific molecule 1 (Esm1), found in Mus musculus (Mouse).